The following is a 255-amino-acid chain: Type III pantothenate kinase (255 aa).

6 to 13 is a binding site for ATP; it reads DVGNTHIV. Residues tyrosine 100 and 107 to 110 contribute to the substrate site; that span reads GADR. The Proton acceptor role is filled by aspartate 109. Position 129 (aspartate 129) interacts with K(+). Threonine 132 is a binding site for ATP. Residue threonine 184 participates in substrate binding.

Belongs to the type III pantothenate kinase family. Homodimer. NH4(+) serves as cofactor. It depends on K(+) as a cofactor.

It localises to the cytoplasm. It carries out the reaction (R)-pantothenate + ATP = (R)-4'-phosphopantothenate + ADP + H(+). It functions in the pathway cofactor biosynthesis; coenzyme A biosynthesis; CoA from (R)-pantothenate: step 1/5. Catalyzes the phosphorylation of pantothenate (Pan), the first step in CoA biosynthesis. This chain is Type III pantothenate kinase, found in Ruminiclostridium cellulolyticum (strain ATCC 35319 / DSM 5812 / JCM 6584 / H10) (Clostridium cellulolyticum).